Here is a 251-residue protein sequence, read N- to C-terminus: Putative imidazole glycerol phosphate synthase subunit hisF2 (251 aa).

D130 is a catalytic residue.

The protein belongs to the HisA/HisF family. In terms of assembly, heterodimer of HisH and HisF.

It localises to the cytoplasm. The catalysed reaction is 5-[(5-phospho-1-deoxy-D-ribulos-1-ylimino)methylamino]-1-(5-phospho-beta-D-ribosyl)imidazole-4-carboxamide + L-glutamine = D-erythro-1-(imidazol-4-yl)glycerol 3-phosphate + 5-amino-1-(5-phospho-beta-D-ribosyl)imidazole-4-carboxamide + L-glutamate + H(+). Its pathway is amino-acid biosynthesis; L-histidine biosynthesis; L-histidine from 5-phospho-alpha-D-ribose 1-diphosphate: step 5/9. In terms of biological role, IGPS catalyzes the conversion of PRFAR and glutamine to IGP, AICAR and glutamate. The HisF subunit catalyzes the cyclization activity that produces IGP and AICAR from PRFAR using the ammonia provided by the HisH subunit. The chain is Putative imidazole glycerol phosphate synthase subunit hisF2 (hisF2) from Pseudomonas aeruginosa (strain ATCC 15692 / DSM 22644 / CIP 104116 / JCM 14847 / LMG 12228 / 1C / PRS 101 / PAO1).